The following is a 478-amino-acid chain: 3-isopropylmalate dehydratase large subunit (478 aa).

Cys-347, Cys-407, and Cys-410 together coordinate [4Fe-4S] cluster.

This sequence belongs to the aconitase/IPM isomerase family. LeuC type 1 subfamily. As to quaternary structure, heterodimer of LeuC and LeuD. [4Fe-4S] cluster is required as a cofactor.

The catalysed reaction is (2R,3S)-3-isopropylmalate = (2S)-2-isopropylmalate. It participates in amino-acid biosynthesis; L-leucine biosynthesis; L-leucine from 3-methyl-2-oxobutanoate: step 2/4. In terms of biological role, catalyzes the isomerization between 2-isopropylmalate and 3-isopropylmalate, via the formation of 2-isopropylmaleate. In Prochlorococcus marinus (strain MIT 9313), this protein is 3-isopropylmalate dehydratase large subunit.